We begin with the raw amino-acid sequence, 253 residues long: Imidazole glycerol phosphate synthase subunit HisF (253 aa).

Residues D11 and D130 contribute to the active site.

This sequence belongs to the HisA/HisF family. Heterodimer of HisH and HisF.

It is found in the cytoplasm. It carries out the reaction 5-[(5-phospho-1-deoxy-D-ribulos-1-ylimino)methylamino]-1-(5-phospho-beta-D-ribosyl)imidazole-4-carboxamide + L-glutamine = D-erythro-1-(imidazol-4-yl)glycerol 3-phosphate + 5-amino-1-(5-phospho-beta-D-ribosyl)imidazole-4-carboxamide + L-glutamate + H(+). The protein operates within amino-acid biosynthesis; L-histidine biosynthesis; L-histidine from 5-phospho-alpha-D-ribose 1-diphosphate: step 5/9. IGPS catalyzes the conversion of PRFAR and glutamine to IGP, AICAR and glutamate. The HisF subunit catalyzes the cyclization activity that produces IGP and AICAR from PRFAR using the ammonia provided by the HisH subunit. This Dehalococcoides mccartyi (strain ATCC BAA-2100 / JCM 16839 / KCTC 5957 / BAV1) protein is Imidazole glycerol phosphate synthase subunit HisF.